The following is a 156-amino-acid chain: Flagellar assembly factor FliW (156 aa).

It belongs to the FliW family. In terms of assembly, interacts with translational regulator CsrA and flagellin(s).

The protein resides in the cytoplasm. Functionally, acts as an anti-CsrA protein, binds CsrA and prevents it from repressing translation of its target genes, one of which is flagellin. Binds to flagellin and participates in the assembly of the flagellum. This Pseudothermotoga lettingae (strain ATCC BAA-301 / DSM 14385 / NBRC 107922 / TMO) (Thermotoga lettingae) protein is Flagellar assembly factor FliW.